A 737-amino-acid polypeptide reads, in one-letter code: Glycogen [starch] synthase, muscle (737 aa).

The residue at position 8 (Ser8) is a Phosphoserine; by AMPK and PKA. Position 11 is a phosphoserine (Ser11). UDP is bound at residue Lys39. UDP-alpha-D-glucose is bound by residues His205 and Arg211. Residues His291, Glu292, Gln294, His297, and Lys301 each contribute to the alpha-D-glucose 6-phosphate site. Arg331 lines the UDP pocket. UDP-alpha-D-glucose is bound at residue Arg331. Ser412 is modified (phosphoserine). His501 contributes to the alpha-D-glucose 6-phosphate binding site. The UDP-alpha-D-glucose site is built by Glu510, Trp512, and Gly513. Residue Thr515 coordinates UDP. Alpha-D-glucose 6-phosphate-binding residues include Arg582 and Arg586. The tract at residues 634-737 is disordered; it reads YRYPRPASVP…PTSSLGEERN (104 aa). Residues Ser641, Ser645, Ser649, and Ser652 each carry the phosphoserine modification. Residue Ser653 is modified to Phosphoserine; by GSK3-alpha and GSK3-beta. Ser657 carries the post-translational modification Phosphoserine; by CK2. Acidic residues predominate over residues 658–681; that stretch reads EDEEDPRNGPLEEDGERYDEDEEA. Residues 682 to 695 are compositionally biased toward basic and acidic residues; the sequence is AKDRRNIRAPEWPR. A Phosphoserine modification is found at Ser698. A compositionally biased stretch (polar residues) spans 698–714; it reads SCTSSTSGSKRNSVDTA. Thr700 is modified (phosphothreonine). Ser710 bears the Phosphoserine mark. Over residues 715–737 the composition is skewed to low complexity; sequence TSSSLSTPSEPLSPTSSLGEERN. At Thr721 the chain carries Phosphothreonine. Residues Ser727 and Ser731 each carry the phosphoserine modification.

It belongs to the glycosyltransferase 3 family. As to quaternary structure, part of the GYS1-GYG1 complex, a heterooctamer composed of a tetramer of GYS1 and 2 dimers of GYG1, where each GYS1 protomer binds to one GYG1 subunit (via GYG1 C-terminus); the GYS1 tetramer may dissociate from GYG1 dimers to continue glycogen polymerization on its own. Phosphorylation at Ser-8 by AMPK inactivates the enzyme activity. Primed phosphorylation at Ser-657 (site 5) by CSNK2A1 and CSNK2A2 is required for inhibitory phosphorylation at Ser-641 (site 3a), Ser-645 (site 3b), Ser-649 (site 3c) and Ser-653 (site 4) by GSK3A an GSK3B. Phosphorylated at Ser-641 by DYRK2, leading to inactivation. Phosphorylated at Ser-641 by PASK, leading to inactivation; phosphorylation by PASK is inhibited by glycogen. Dephosphorylation at Ser-641 and Ser-645 by PP1 activates the enzyme. As to expression, expressed in skeletal muscle and most other cell types where glycogen is present.

It catalyses the reaction [(1-&gt;4)-alpha-D-glucosyl](n) + UDP-alpha-D-glucose = [(1-&gt;4)-alpha-D-glucosyl](n+1) + UDP + H(+). It functions in the pathway glycan biosynthesis; glycogen biosynthesis. Allosteric activation by glucose-6-phosphate. Phosphorylation reduces enzyme activity by constraining a tense conformation of the tetramer through inter-subunit interaction. Phosphorylation reduces the activity towards UDP-glucose. When in the non-phosphorylated state, glycogen synthase does not require glucose-6-phosphate as an allosteric activator; when phosphorylated it does. Glycogen synthase participates in the glycogen biosynthetic process along with glycogenin and glycogen branching enzyme. Extends the primer composed of a few glucose units formed by glycogenin by adding new glucose units to it. In this context, glycogen synthase transfers the glycosyl residue from UDP-Glc to the non-reducing end of alpha-1,4-glucan. In Homo sapiens (Human), this protein is Glycogen [starch] synthase, muscle.